A 472-amino-acid polypeptide reads, in one-letter code: Ammonium transporter Rh type C (472 aa).

Residues 1–9 (MAWNTNLRW) are Cytoplasmic-facing. A helical membrane pass occupies residues 10-30 (RLPLTCLLLEVVMVILFGVFV). Residues 31-51 (RYDFDADAHWWSWRTEFYYRY) lie on the Extracellular side of the membrane. Residues 52-72 (PSFQDVHVMVFVGFGFLMTFL) form a helical membrane-spanning segment. Topologically, residues 73–76 (QRYG) are cytoplasmic. A helical transmembrane segment spans residues 77–97 (FSAVGFNFLLAAFGIQWALLM). At 98-114 (QGWFHFLQGRYIVVGVE) the chain is on the extracellular side. Residues 115 to 135 (NLINADFCVASVCVAFGAVLG) traverse the membrane as a helical segment. The Cytoplasmic segment spans residues 136 to 139 (KVSP). Residues 140–160 (IQLLIMTFFQVTLFAVNEFIL) form a helical membrane-spanning segment. The Extracellular segment spans residues 161–168 (LNLLKVKD). A helical membrane pass occupies residues 169-191 (AGGSMTIHTFGAYFGLTVTRILY). Residues 192 to 209 (RRNLEQSKERQNSVYQSD) are Cytoplasmic-facing. Residues 210-230 (LFAMIGTLFLWMYWPSFNSAI) form a helical membrane-spanning segment. Residues 231-241 (SYHGDSQHRAA) are Extracellular-facing. Residues 242 to 262 (INTYCSLAACVLTSVAISSAL) traverse the membrane as a helical segment. Topologically, residues 263–294 (HKKGKLDMVHIQNATPAGGVAVGTAAEMMLMP) are cytoplasmic. A helical membrane pass occupies residues 295–315 (YGALIVGFVCGIISTLGFVYL). Over 316-336 (TPFLESRLHIQDTCGINNLHG) the chain is Extracellular. The helical transmembrane segment at 337–357 (IPGIIGGIVGAVTAASASLEV) threads the bilayer. The Cytoplasmic segment spans residues 358–388 (YGKEGLVHSFDFQGFKRDWTARTQGKFQIYG). Residues 389 to 409 (LLVTLAMALMGGIIVGVGLIL) traverse the membrane as a helical segment. Over 410–450 (RLPFWGQPSDENCFEDAVYWEMPEGNSTVYIPEDPTFKPSG) the chain is Extracellular. N-linked (GlcNAc...) asparagine glycosylation is present at N435. A helical transmembrane segment spans residues 451-471 (PSVPSVPMVSPLPMASSVPLV). Residue P472 is a topological domain, cytoplasmic.

This sequence belongs to the ammonium transporter (TC 2.A.49) family. Rh subfamily. In terms of assembly, homotrimer. In terms of processing, N-glycosylated.

The protein resides in the cell membrane. It is found in the apical cell membrane. It catalyses the reaction NH4(+)(in) = NH4(+)(out). The enzyme catalyses methylamine(out) = methylamine(in). The catalysed reaction is CO2(out) = CO2(in). Its function is as follows. Ammonium transporter involved in the maintenance of acid-base homeostasis. Transports ammonium and its related derivative methylammonium across the plasma membrane of epithelial cells likely contributing to renal transepithelial ammonia transport and ammonia metabolism. Postulated to primarily mediate an electroneutral bidirectional transport of NH3 ammonia species according to a mechanism that implies interaction of an NH4(+) ion with acidic residues of the pore entry followed by dissociation of NH4(+) into NH3 and H(+). As a result NH3 transits through the central pore and is protonated on the extracellular side reforming NH4(+). May act as a CO2 channel providing for renal acid secretion. The chain is Ammonium transporter Rh type C (RHCG) from Pongo abelii (Sumatran orangutan).